We begin with the raw amino-acid sequence, 42 residues long: Photosystem I reaction center subunit IX (42 aa).

The helical transmembrane segment at 7–27 (YLSAAPVLSTLWLGALAGLLI) threads the bilayer.

This sequence belongs to the PsaJ family.

It is found in the plastid membrane. In terms of biological role, may help in the organization of the PsaE and PsaF subunits. This Cuscuta exaltata (Tall dodder) protein is Photosystem I reaction center subunit IX.